Consider the following 432-residue polypeptide: Adenylosuccinate synthetase (432 aa).

GTP contacts are provided by residues 13 to 19 and 41 to 43; these read GDEGKGK and GHT. Catalysis depends on Asp-14, which acts as the Proton acceptor. The Mg(2+) site is built by Asp-14 and Gly-41. IMP is bound by residues 14-17, 39-42, Thr-130, Arg-144, Gln-225, Thr-240, and Arg-304; these read DEGK and NAGH. The Proton donor role is filled by His-42. A substrate-binding site is contributed by 300-306; sequence ATTGRRR. Residues Arg-306, 332-334, and 415-417 contribute to the GTP site; these read KLD and STG.

This sequence belongs to the adenylosuccinate synthetase family. Homodimer. Requires Mg(2+) as cofactor.

The protein localises to the cytoplasm. It catalyses the reaction IMP + L-aspartate + GTP = N(6)-(1,2-dicarboxyethyl)-AMP + GDP + phosphate + 2 H(+). It functions in the pathway purine metabolism; AMP biosynthesis via de novo pathway; AMP from IMP: step 1/2. In terms of biological role, plays an important role in the de novo pathway of purine nucleotide biosynthesis. Catalyzes the first committed step in the biosynthesis of AMP from IMP. This chain is Adenylosuccinate synthetase, found in Escherichia coli (strain K12).